We begin with the raw amino-acid sequence, 472 residues long: Sarcalumenin (472 aa).

An N-terminal signal peptide occupies residues Met-1–Ala-19. The region spanning Ile-89–Ala-330 is the Dynamin-type G domain. The tract at residues Gly-99–Ser-106 is G1 motif. N-linked (GlcNAc...) asparagine glycosylation is present at Ser-102. The G2 motif stretch occupies residues Glu-127–Pro-128. The interval Asp-189–Gly-192 is G3 motif. The segment at Asn-254–Asp-257 is G4 motif. Pro-277 is a region of interest (G5 motif). N-linked (GlcNAc...) asparagine glycans are attached at residues Asn-280 and Asn-388.

Belongs to the TRAFAC class dynamin-like GTPase superfamily. Dynamin/Fzo/YdjA family. N-glycosylated. In terms of tissue distribution, detected in skeletal muscle.

The protein localises to the sarcoplasmic reticulum lumen. Its subcellular location is the sarcoplasmic reticulum membrane. The sequence is that of Sarcalumenin (SRL) from Oryctolagus cuniculus (Rabbit).